The chain runs to 161 residues: V-type proton ATPase 16 kDa proteolipid subunit c (161 aa).

Topologically, residues 1–15 (MSYDLATAERAAYAP) are lumenal. The chain crosses the membrane as a helical span at residues 16–36 (FFGYMGAASAQIFTVLGAAYG). The Cytoplasmic segment spans residues 37–58 (TAKSAVGISSMGVMRPELIMKS). The helical transmembrane segment at 59–79 (VIPVIMAGIIGIYGLVVAMVL) threads the bilayer. The Lumenal segment spans residues 80–98 (RGKVTSASAGYTLDKGFAH). A helical membrane pass occupies residues 99-119 (LAAGLTCGLCGLGAGYAIGIV). Residues 120–137 (GDAGVRGTAQQPRLFVGM) are Cytoplasmic-facing. A helical membrane pass occupies residues 138-158 (ILILIFSEVLGLYGMIVALIL). Residues 159–161 (GTS) lie on the Lumenal side of the membrane.

This sequence belongs to the V-ATPase proteolipid subunit family. As to quaternary structure, V-ATPase is a heteromultimeric enzyme made up of two complexes: the ATP-hydrolytic V1 complex and the proton translocation V0 complex. The V1 complex consists of three catalytic AB heterodimers that form a heterohexamer, three peripheral stalks each consisting of EG heterodimers, one central rotor including subunits D and F, and the regulatory subunits C and H. The proton translocation complex V0 consists of the proton transport subunit a, a ring of proteolipid subunits c9c'', rotary subunit d, subunits e and f, and the accessory subunits vah-19/Ac45 and vah-20/PRR.

The protein localises to the membrane. Its function is as follows. Proton-conducting pore forming subunit of the V0 complex of vacuolar(H+)-ATPase (V-ATPase), a multisubunit enzyme composed of a peripheral complex (V1) that hydrolyzes ATP and a membrane integral complex (V0) that translocates protons. V-ATPase is responsible for acidifying and maintaining the pH of intracellular compartments and in some cell types, is targeted to the plasma membrane, where it is responsible for acidifying the extracellular environment. The protein is V-type proton ATPase 16 kDa proteolipid subunit c (12) of Ascaris suum (Pig roundworm).